Here is a 64-residue protein sequence, read N- to C-terminus: PYLa/PGLa B (64 aa).

A signal peptide spans 1–20; that stretch reads MYKQIFLCLIIAALCATIMA. Positions 21 to 35 are excised as a propeptide; it reads EASALADADDDDDKR. Leu59 bears the Leucine amide mark. The propeptide occupies 60–64; sequence GRRDS.

This sequence belongs to the gastrin/cholecystokinin family. Magainin subfamily. As to expression, expressed by the skin glands. Synthesized in the stomach and stored in a novel granular multinucleated cell in the gastric mucosa. Stored as active, processed peptides in large granules within the granular gland secretions of the skin.

It is found in the secreted. Functionally, PGLa and PGLa-H display a broad-spectrum of antibacterial activity against a range of Gram-positive and Gram-negative bacteria. PGLa also displays antifungal activity against C.albicans ATCC 14053. PGLa-H shows moderate antibacterial activity against the multidrug-resistant methicillin-resistant S.aureus (MRSA) but exhibits very little hemolytic activity. In Xenopus laevis (African clawed frog), this protein is PYLa/PGLa B (pgla-b).